Reading from the N-terminus, the 100-residue chain is uncharacterized protein (100 aa).

The next 2 helical transmembrane spans lie at 50–70 (LLIF…FSLF) and 75–95 (DVFL…SPEV).

Its subcellular location is the membrane. This is an uncharacterized protein from Saccharomyces cerevisiae (strain ATCC 204508 / S288c) (Baker's yeast).